The following is a 160-amino-acid chain: METQRASLSLGRRSLWLLLLGLVLASASAQALSYREAVLRAVDQLNEKSSEANLYRLLELDPPPKQDDENSNIPKPVSFRVKETVCPRTSQQPAEQCDFKENGLLKECVGTVTLDQVGNNFDITCAEPQSVRGLRRLGRKIAHGVKKYGPTVLRIIRIAG.

Positions 1 to 29 are cleaved as a signal peptide; the sequence is METQRASLSLGRRSLWLLLLGLVLASASA. Residues 30 to 131 constitute a propeptide that is removed on maturation; it reads QALSYREAVL…DITCAEPQSV (102 aa). Disulfide bonds link Cys86–Cys97 and Cys108–Cys125.

Belongs to the cathelicidin family.

The protein localises to the secreted. In terms of biological role, broad spectrum bactericidal agent. In Ovis aries (Sheep), this protein is Cathelin-related peptide SC5.